We begin with the raw amino-acid sequence, 261 residues long: 5'-nucleotidase SurE (261 aa).

The a divalent metal cation site is built by aspartate 8, aspartate 9, serine 43, and asparagine 96.

Belongs to the SurE nucleotidase family. It depends on a divalent metal cation as a cofactor.

The protein localises to the cytoplasm. It carries out the reaction a ribonucleoside 5'-phosphate + H2O = a ribonucleoside + phosphate. Functionally, nucleotidase that shows phosphatase activity on nucleoside 5'-monophosphates. The sequence is that of 5'-nucleotidase SurE from Dinoroseobacter shibae (strain DSM 16493 / NCIMB 14021 / DFL 12).